Here is a 386-residue protein sequence, read N- to C-terminus: UDP-N-acetylbacillosamine transaminase (386 aa).

Substrate contacts are provided by residues 25-28, alanine 56, and serine 179; that span reads NYIA. Lysine 184 is modified (N6-(pyridoxal phosphate)lysine). Substrate-binding positions include asparagine 227 and 325–328; that span reads QIET.

Belongs to the DegT/DnrJ/EryC1 family. The cofactor is pyridoxal 5'-phosphate.

It carries out the reaction UDP-N-acetylbacillosamine + 2-oxoglutarate = UDP-2-acetamido-2,6-dideoxy-alpha-D-xylo-hex-4-ulose + L-glutamate. It participates in protein modification; protein glycosylation. In terms of biological role, aminotransferase involved in the bacillosamine biosynthesis pathway by producing UDP-4-amino-4,6-dideoxy-alpha-D-GlcNAc (UDP-2-acetamido-4-amino-2,4,6-trideoxy-alpha-D-glucopyranose), a precursor used in the production of the glycan component 2,4-diacetamido-2,4,6-trideoxy-alpha-D-glucopyranose. Required for host colonization and virulence. Involved in the N-linked protein glycosylation pathway. The polypeptide is UDP-N-acetylbacillosamine transaminase (pglE) (Campylobacter jejuni subsp. jejuni serotype O:2 (strain ATCC 700819 / NCTC 11168)).